Reading from the N-terminus, the 652-residue chain is Acetyl-coenzyme A synthetase (652 aa).

Residues 191 to 194 (RAGN) and threonine 311 contribute to the CoA site. ATP contacts are provided by residues 387–389 (GEP), 411–416 (DTWWQT), aspartate 503, and arginine 518. Serine 526 serves as a coordination point for CoA. Residue arginine 529 coordinates ATP. Residues valine 540, histidine 542, and valine 545 each contribute to the Mg(2+) site. Arginine 587 contacts CoA. Lysine 613 is modified (N6-acetyllysine).

This sequence belongs to the ATP-dependent AMP-binding enzyme family. The cofactor is Mg(2+). Acetylated. Deacetylation by the SIR2-homolog deacetylase activates the enzyme.

It catalyses the reaction acetate + ATP + CoA = acetyl-CoA + AMP + diphosphate. Functionally, catalyzes the conversion of acetate into acetyl-CoA (AcCoA), an essential intermediate at the junction of anabolic and catabolic pathways. AcsA undergoes a two-step reaction. In the first half reaction, AcsA combines acetate with ATP to form acetyl-adenylate (AcAMP) intermediate. In the second half reaction, it can then transfer the acetyl group from AcAMP to the sulfhydryl group of CoA, forming the product AcCoA. The protein is Acetyl-coenzyme A synthetase of Marinomonas sp. (strain MWYL1).